Here is a 140-residue protein sequence, read N- to C-terminus: Probable deoxyuridine 5'-triphosphate nucleotidohydrolase (140 aa).

Residues 62 to 64 (RSG), 76 to 79 (GVID), arginine 130, and 135 to 136 (FG) contribute to the substrate site.

Belongs to the dUTPase family. Homotrimer. It depends on Mg(2+) as a cofactor.

The catalysed reaction is dUTP + H2O = dUMP + diphosphate + H(+). Its pathway is pyrimidine metabolism; dUMP biosynthesis; dUMP from dCTP (dUTP route): step 2/2. In terms of biological role, this enzyme is involved in nucleotide metabolism: it produces dUMP, the immediate precursor of thymidine nucleotides and it decreases the intracellular concentration of dUTP so that uracil cannot be incorporated into DNA. The chain is Probable deoxyuridine 5'-triphosphate nucleotidohydrolase from Schizosaccharomyces pombe (strain 972 / ATCC 24843) (Fission yeast).